Reading from the N-terminus, the 374-residue chain is Dual-specificity RNA methyltransferase RlmN (374 aa).

Glu91 (proton acceptor) is an active-site residue. The Radical SAM core domain occupies 97–340; the sequence is EDDRGTLCVS…TTVRKTRGDD (244 aa). A disulfide bridge links Cys104 with Cys345. [4Fe-4S] cluster is bound by residues Cys111, Cys115, and Cys118. Residues 166–167, Ser198, 220–222, and Asn302 contribute to the S-adenosyl-L-methionine site; these read GE and SLH. Catalysis depends on Cys345, which acts as the S-methylcysteine intermediate.

The protein belongs to the radical SAM superfamily. RlmN family. [4Fe-4S] cluster is required as a cofactor.

It localises to the cytoplasm. The catalysed reaction is adenosine(2503) in 23S rRNA + 2 reduced [2Fe-2S]-[ferredoxin] + 2 S-adenosyl-L-methionine = 2-methyladenosine(2503) in 23S rRNA + 5'-deoxyadenosine + L-methionine + 2 oxidized [2Fe-2S]-[ferredoxin] + S-adenosyl-L-homocysteine. The enzyme catalyses adenosine(37) in tRNA + 2 reduced [2Fe-2S]-[ferredoxin] + 2 S-adenosyl-L-methionine = 2-methyladenosine(37) in tRNA + 5'-deoxyadenosine + L-methionine + 2 oxidized [2Fe-2S]-[ferredoxin] + S-adenosyl-L-homocysteine. Specifically methylates position 2 of adenine 2503 in 23S rRNA and position 2 of adenine 37 in tRNAs. m2A2503 modification seems to play a crucial role in the proofreading step occurring at the peptidyl transferase center and thus would serve to optimize ribosomal fidelity. The polypeptide is Dual-specificity RNA methyltransferase RlmN (Delftia acidovorans (strain DSM 14801 / SPH-1)).